Reading from the N-terminus, the 126-residue chain is uncharacterized protein (126 aa).

2 helical membrane-spanning segments follow: residues 21–43 (LIVW…RIFS) and 48–70 (SVTF…LLLL).

Its subcellular location is the membrane. This is an uncharacterized protein from Saccharomyces cerevisiae (strain ATCC 204508 / S288c) (Baker's yeast).